Consider the following 369-residue polypeptide: Probable dual-specificity RNA methyltransferase RlmN (369 aa).

Glu-108 (proton acceptor) is an active-site residue. A Radical SAM core domain is found at 114 to 357; the sequence is YPDRATVCIS…CTVRDTRGQE (244 aa). A disulfide bridge connects residues Cys-121 and Cys-362. Cys-128, Cys-132, and Cys-135 together coordinate [4Fe-4S] cluster. Residues 183-184, Ser-217, 240-242, and Asn-319 contribute to the S-adenosyl-L-methionine site; these read GE and SLH. Catalysis depends on Cys-362, which acts as the S-methylcysteine intermediate.

The protein belongs to the radical SAM superfamily. RlmN family. [4Fe-4S] cluster serves as cofactor.

The protein resides in the cytoplasm. The enzyme catalyses adenosine(2503) in 23S rRNA + 2 reduced [2Fe-2S]-[ferredoxin] + 2 S-adenosyl-L-methionine = 2-methyladenosine(2503) in 23S rRNA + 5'-deoxyadenosine + L-methionine + 2 oxidized [2Fe-2S]-[ferredoxin] + S-adenosyl-L-homocysteine. The catalysed reaction is adenosine(37) in tRNA + 2 reduced [2Fe-2S]-[ferredoxin] + 2 S-adenosyl-L-methionine = 2-methyladenosine(37) in tRNA + 5'-deoxyadenosine + L-methionine + 2 oxidized [2Fe-2S]-[ferredoxin] + S-adenosyl-L-homocysteine. In terms of biological role, specifically methylates position 2 of adenine 2503 in 23S rRNA and position 2 of adenine 37 in tRNAs. This is Probable dual-specificity RNA methyltransferase RlmN from Saccharopolyspora erythraea (strain ATCC 11635 / DSM 40517 / JCM 4748 / NBRC 13426 / NCIMB 8594 / NRRL 2338).